The sequence spans 307 residues: Taste receptor type 2 member 41 (307 aa).

The Extracellular segment spans residues 1–7; that stretch reads MQAALTA. The chain crosses the membrane as a helical span at residues 8-28; that stretch reads FFMLLFSLLSLLGIAANGFIV. Topologically, residues 29 to 40 are cytoplasmic; the sequence is LVLGREWLRYGR. The chain crosses the membrane as a helical span at residues 41–61; the sequence is LLPLDMILISLGASRFCLQLV. Residues 62–88 lie on the Extracellular side of the membrane; the sequence is GTVHNFYYSAQKVEYSGGLGRQFFHLH. The chain crosses the membrane as a helical span at residues 89–109; it reads WHFLNSATFWFCSWLSVLFCV. The Cytoplasmic segment spans residues 110-129; sequence KIANITHPTFLWLKWRFPGW. A helical transmembrane segment spans residues 130–150; that stretch reads VPWLLLGSVLISFIITLLFFW. Residues 151–183 are Extracellular-facing; the sequence is VNYPAYQEFLIRKFSVNMTYKWNTRIETYYFPS. N167 carries N-linked (GlcNAc...) asparagine glycosylation. Residues 184-204 form a helical membrane-spanning segment; sequence LKLVIWSIPFSVFLVSIMLLI. The Cytoplasmic segment spans residues 205–234; sequence NSLRRHTQRMQHNGHSLQDPSTQAHTRALK. A helical membrane pass occupies residues 235 to 255; it reads SLISFLILYALSFLSLIIDAT. Residues 256–264 are Extracellular-facing; it reads KFISMQNDF. The chain crosses the membrane as a helical span at residues 265-285; sequence YWPWQIAVYLCISVHPFILIF. The Cytoplasmic segment spans residues 286 to 307; that stretch reads SNLKLRSVFSQLLLLARGFWVA.

This sequence belongs to the G-protein coupled receptor T2R family.

It is found in the membrane. Its function is as follows. Receptor that may play a role in the perception of bitterness and is gustducin-linked. May play a role in sensing the chemical composition of the gastrointestinal content. The activity of this receptor may stimulate alpha gustducin, mediate PLC-beta-2 activation and lead to the gating of TRPM5. The polypeptide is Taste receptor type 2 member 41 (TAS2R41) (Pan troglodytes (Chimpanzee)).